The chain runs to 515 residues: Proline--tRNA ligase (515 aa).

The protein belongs to the class-II aminoacyl-tRNA synthetase family. ProS type 3 subfamily. In terms of assembly, homodimer.

The protein localises to the cytoplasm. The catalysed reaction is tRNA(Pro) + L-proline + ATP = L-prolyl-tRNA(Pro) + AMP + diphosphate. Functionally, catalyzes the attachment of proline to tRNA(Pro) in a two-step reaction: proline is first activated by ATP to form Pro-AMP and then transferred to the acceptor end of tRNA(Pro). The polypeptide is Proline--tRNA ligase (Novosphingobium aromaticivorans (strain ATCC 700278 / DSM 12444 / CCUG 56034 / CIP 105152 / NBRC 16084 / F199)).